The following is a 109-amino-acid chain: UPF0482 protein ESA_01750 (109 aa).

The signal sequence occupies residues 1-24 (MNKFLRHSLLLALLTGALSGVANA). The span at 38 to 55 (RTRQDAAMDKEQWNDTRS) shows a compositional bias: basic and acidic residues. The interval 38 to 63 (RTRQDAAMDKEQWNDTRSLRQKVNKR) is disordered.

It belongs to the UPF0482 family.

The sequence is that of UPF0482 protein ESA_01750 from Cronobacter sakazakii (strain ATCC BAA-894) (Enterobacter sakazakii).